A 103-amino-acid polypeptide reads, in one-letter code: Large ribosomal subunit protein uL24 (103 aa).

This sequence belongs to the universal ribosomal protein uL24 family. Part of the 50S ribosomal subunit.

In terms of biological role, one of two assembly initiator proteins, it binds directly to the 5'-end of the 23S rRNA, where it nucleates assembly of the 50S subunit. Functionally, one of the proteins that surrounds the polypeptide exit tunnel on the outside of the subunit. In Sinorhizobium medicae (strain WSM419) (Ensifer medicae), this protein is Large ribosomal subunit protein uL24.